The primary structure comprises 310 residues: Low affinity immunoglobulin gamma Fc region receptor II-b (310 aa).

Residues 1-42 form the signal peptide; the sequence is MGILSFLPVLATESDWADCKSPQPWGHMLLWTAVLFLAPVAG. Over 43–217 the chain is Extracellular; the sequence is TPAAPPKAVL…KPVTITVQAP (175 aa). 2 consecutive Ig-like C2-type domains span residues 48–127 and 131–213; these read PKAV…VHLT and EWLV…VTIT. 2 disulfides stabilise this stretch: Cys71–Cys113 and Cys152–Cys196. N-linked (GlcNAc...) asparagine glycans are attached at residues Asn106, Asn180, and Asn187. The chain crosses the membrane as a helical span at residues 218–240; sequence SSSPMGIIVAVVTGIAVAAIVAA. Residues 241–310 are Cytoplasmic-facing; that stretch reads VVALIYCRKK…LEEPDDQNRI (70 aa). The ITIM motif motif lies at 290–295; it reads ITYSLL. A Phosphotyrosine; by SRC-type Tyr-kinases modification is found at Tyr292.

As to quaternary structure, interacts with INPP5D/SHIP1. Interacts with FGR. Interacts with LYN. (Microbial infection) Isoform IIB1 interacts with measles virus protein N. Protein N is released in the blood following lysis of measles infected cells. This interaction presumably block inflammatory immune response. Phosphorylated by the SRC-type Tyr-kinases LYN and BLK. In terms of tissue distribution, is the most broadly distributed Fc-gamma-receptor. Expressed in monocyte, neutrophils, macrophages, basophils, eosinophils, Langerhans cells, B-cells, platelets cells and placenta (endothelial cells). Not detected in natural killer cells.

It localises to the cell membrane. Its function is as follows. Receptor for the Fc region of complexed or aggregated immunoglobulins gamma. Low affinity receptor. Involved in a variety of effector and regulatory functions such as phagocytosis of immune complexes and modulation of antibody production by B-cells. Binding to this receptor results in down-modulation of previous state of cell activation triggered via antigen receptors on B-cells (BCR), T-cells (TCR) or via another Fc receptor. Isoform IIB1 fails to mediate endocytosis or phagocytosis. Isoform IIB2 does not trigger phagocytosis. This is Low affinity immunoglobulin gamma Fc region receptor II-b (FCGR2B) from Homo sapiens (Human).